Reading from the N-terminus, the 285-residue chain is Meiotically up-regulated gene 125 protein (285 aa).

It localises to the cytoplasm. It is found in the nucleus. Has a role in meiosis. This chain is Meiotically up-regulated gene 125 protein (mug125), found in Schizosaccharomyces pombe (strain 972 / ATCC 24843) (Fission yeast).